A 1856-amino-acid polypeptide reads, in one-letter code: DNA-directed RNA polymerase II subunit RPB1 (1856 aa).

Zn(2+) is bound by residues C66, C69, C76, H79, C106, C109, C149, and C177. The lid loop stretch occupies residues 256 to 268 (PAVVTFGSAKNQD). The segment at 314–331 (NCIPGLPTATQKGGRPLK) is rudder loop. The Mg(2+) site is built by D489, D491, and D493. Residues 827–839 (PSEFFFHAMGGRE) are bridging helix. K1260 participates in a covalent cross-link: Glycyl lysine isopeptide (Lys-Gly) (interchain with G-Cter in ubiquitin). The disordered stretch occupies residues 1523–1856 (PTTGGMSPGA…PSSPTYDPNS (334 aa)). Positions 1587–1856 (SMTSPHYSPT…PSSPTYDPNS (270 aa)) are enriched in low complexity. 27 repeat units span residues 1593 to 1599 (YSPTSPS), 1600 to 1606 (YSPTSPA), 1616 to 1622 (YSPTSPS), 1623 to 1629 (YSPTSPS), 1630 to 1636 (YSPTSPS), 1637 to 1643 (YSPTSPS), 1644 to 1650 (YSPTSPS), 1651 to 1657 (YSPTSPS), 1658 to 1664 (YSPSSPS), 1665 to 1671 (YSPSSPS), 1672 to 1678 (YSPSSPR), 1679 to 1685 (YSPTSPT), 1686 to 1692 (YSPTSPT), 1693 to 1699 (YSPTSPT), 1700 to 1706 (YSPTSPT), 1707 to 1713 (YSPTSPS), 1720 to 1726 (YSPSSPK), 1727 to 1733 (YSPSSPT), 1734 to 1740 (YSPTSPS), 1741 to 1747 (YSPTSPQ), 1748 to 1754 (YSPTSPQ), 1755 to 1761 (YSPSSPT), 1769 to 1775 (YNPTSPR), 1782 to 1788 (YSPTSPT), 1789 to 1795 (YSPTSPS), 1796 to 1802 (YTPSSPQ), and 1803 to 1809 (YSPTSPT). The tract at residues 1593–1816 (YSPTSPSYSP…SPTYTPSPSE (224 aa)) is C-terminal domain (CTD); 28 X 7 AA approximate tandem repeats of Y-[ST]-P-[ST]-S-P-[AGKNQRST]. A 28; approximate repeat occupies 1810–1816 (YTPSPSE).

It belongs to the RNA polymerase beta' chain family. In terms of assembly, component of the RNA polymerase II (Pol II) complex consisting of 12 subunits. Interacts with sig-7. The tandem 7 residues repeats in the C-terminal domain (CTD) can be highly phosphorylated. The phosphorylation activates Pol II. Phosphorylation occurs mainly at residues 'Ser-2' and 'Ser-5' of the heptapeptide repeat and starts at the 3- to 4-cell embryonic stage. This phosphorylation also occurs in the early stages of oocyte development and is not detected in oocytes arrested at the meiotic diakinesis stage. In the somatic lineage, phosphorylation at 'Ser-2' is mediated by cdk-12 downstream of cdk-9 whereas in the germline lineage cdk-12 phosphorylates 'Ser-2' independently of cdk-9. Phosphorylation is likely mediated by cdk-7. May be dephosphorylated by fcp-1 in diakinetic oocytes and in 1-cell and 2-cell embryos. Dephosphorylated at 'Ser-5' of the heptapeptide repeats by ssup-72. The phosphorylation state is believed to result from the balanced action of site-specific CTD kinases and phosphatase, and a 'CTD code' that specifies the position of Pol II within the transcription cycle has been proposed. In terms of processing, following transcription stress, the elongating form of RNA polymerase II (RNA pol IIo) is polyubiquitinated via 'Lys-63'-linkages on Lys-1260 at DNA damage sites without leading to degradation: ubiquitination promotes RNA pol IIo backtracking to allow access by the transcription-coupled nucleotide excision repair (TC-NER) machinery. Subsequent DEF1-dependent polyubiquitination by the elongin complex via 'Lys-48'-linkages may lead to proteasome-mediated degradation; presumably at stalled RNA pol II where TC-NER has failed, to halt global transcription and enable 'last resort' DNA repair pathways.

It is found in the nucleus. It localises to the chromosome. It carries out the reaction RNA(n) + a ribonucleoside 5'-triphosphate = RNA(n+1) + diphosphate. DNA-dependent RNA polymerase catalyzes the transcription of DNA into RNA using the four ribonucleoside triphosphates as substrates. Largest and catalytic component of RNA polymerase II which synthesizes mRNA precursors and many functional non-coding RNAs. Forms the polymerase active center together with the second largest subunit. Pol II is the central component of the basal RNA polymerase II transcription machinery. It is composed of mobile elements that move relative to each other. RPB1 is part of the core element with the central large cleft, the clamp element that moves to open and close the cleft and the jaws that are thought to grab the incoming DNA template. At the start of transcription, a single-stranded DNA template strand of the promoter is positioned within the central active site cleft of Pol II. A bridging helix emanates from RPB1 and crosses the cleft near the catalytic site and is thought to promote translocation of Pol II by acting as a ratchet that moves the RNA-DNA hybrid through the active site by switching from straight to bent conformations at each step of nucleotide addition. During transcription elongation, Pol II moves on the template as the transcript elongates. Elongation is influenced by the phosphorylation status of the C-terminal domain (CTD) of Pol II largest subunit (RPB1), which serves as a platform for assembly of factors that regulate transcription initiation, elongation, termination and mRNA processing. Involved in the transcription of several genes including those involved in embryogenesis. The protein is DNA-directed RNA polymerase II subunit RPB1 of Caenorhabditis elegans.